The primary structure comprises 848 residues: Adenylate cyclase (848 aa).

The tract at residues 1-535 (MYLYIETLKQ…DVSHHFPLRL (535 aa)) is catalytic. The interval 541-848 (KALYSPCEIR…DAPLLQQYFS (308 aa)) is regulatory. Position 609 is a phosphohistidine; by CRR (histidine 609).

This sequence belongs to the adenylyl cyclase class-1 family.

It localises to the cytoplasm. The catalysed reaction is ATP = 3',5'-cyclic AMP + diphosphate. In Salmonella typhi, this protein is Adenylate cyclase (cyaA).